A 258-amino-acid chain; its full sequence is Tryptophan synthase alpha chain (258 aa).

Catalysis depends on proton acceptor residues Glu-47 and Asp-58.

This sequence belongs to the TrpA family. Tetramer of two alpha and two beta chains.

It catalyses the reaction (1S,2R)-1-C-(indol-3-yl)glycerol 3-phosphate + L-serine = D-glyceraldehyde 3-phosphate + L-tryptophan + H2O. The protein operates within amino-acid biosynthesis; L-tryptophan biosynthesis; L-tryptophan from chorismate: step 5/5. The alpha subunit is responsible for the aldol cleavage of indoleglycerol phosphate to indole and glyceraldehyde 3-phosphate. The chain is Tryptophan synthase alpha chain from Bacillus cereus (strain ZK / E33L).